Here is a 361-residue protein sequence, read N- to C-terminus: Dihydroorotate dehydrogenase (quinone) (361 aa).

FMN is bound by residues 69-73 (AGFDK) and threonine 93. Lysine 73 is a substrate binding site. 118–122 (NRLGF) is a binding site for substrate. Asparagine 147 and asparagine 180 together coordinate FMN. Asparagine 180 serves as a coordination point for substrate. Serine 183 serves as the catalytic Nucleophile. A substrate-binding site is contributed by asparagine 185. The FMN site is built by lysine 221 and threonine 249. 250 to 251 (NT) is a binding site for substrate. FMN contacts are provided by residues glycine 271, glycine 300, and 321–322 (YT).

The protein belongs to the dihydroorotate dehydrogenase family. Type 2 subfamily. Monomer. FMN is required as a cofactor.

The protein localises to the cell membrane. The enzyme catalyses (S)-dihydroorotate + a quinone = orotate + a quinol. Its pathway is pyrimidine metabolism; UMP biosynthesis via de novo pathway; orotate from (S)-dihydroorotate (quinone route): step 1/1. In terms of biological role, catalyzes the conversion of dihydroorotate to orotate with quinone as electron acceptor. This Roseiflexus sp. (strain RS-1) protein is Dihydroorotate dehydrogenase (quinone).